The sequence spans 339 residues: Bifunctional NMN adenylyltransferase/Nudix hydrolase (339 aa).

Positions 1–183 (MQTKYQYGIY…RYIALCDEYQ (183 aa)) are NMN adenylyltransferase. The region spanning 199-335 (PTFITTDAVV…EDHFQIIQHF (137 aa)) is the Nudix hydrolase domain. A Nudix box motif is present at residues 233–254 (GFIKQNETLVEGMLRELKEETR).

In the N-terminal section; belongs to the archaeal NMN adenylyltransferase family. The cofactor is Mg(2+). Mn(2+) serves as cofactor.

Its subcellular location is the cytoplasm. The catalysed reaction is beta-nicotinamide D-ribonucleotide + ATP + H(+) = diphosphate + NAD(+). Its pathway is cofactor biosynthesis; NAD(+) biosynthesis; NAD(+) from nicotinamide D-ribonucleotide: step 1/1. The Nudix hydrolase domain is active on ADP-ribose, (2')-phospho-ADP-ribose, IDP-ribose and NADPH. In Synechocystis sp. (strain ATCC 27184 / PCC 6803 / Kazusa), this protein is Bifunctional NMN adenylyltransferase/Nudix hydrolase.